Consider the following 98-residue polypeptide: MTKSELIERIVTHQGLLSSKDVELAIKTMLEQMSQCLATGDRIEIRGFGSFSLHYRAPRVGRNPKTGQSVSLDGKFVPHFKPGKELRDRVNEEEEGEL.

This sequence belongs to the bacterial histone-like protein family. Heterodimer of an alpha and a beta chain.

Its function is as follows. This protein is one of the two subunits of integration host factor, a specific DNA-binding protein that functions in genetic recombination as well as in transcriptional and translational control. This is Integration host factor subunit beta from Pseudomonas fluorescens (strain Pf0-1).